Here is a 250-residue protein sequence, read N- to C-terminus: Phosphoribosylaminoimidazole-succinocarboxamide synthase (250 aa).

Belongs to the SAICAR synthetase family.

The enzyme catalyses 5-amino-1-(5-phospho-D-ribosyl)imidazole-4-carboxylate + L-aspartate + ATP = (2S)-2-[5-amino-1-(5-phospho-beta-D-ribosyl)imidazole-4-carboxamido]succinate + ADP + phosphate + 2 H(+). It participates in purine metabolism; IMP biosynthesis via de novo pathway; 5-amino-1-(5-phospho-D-ribosyl)imidazole-4-carboxamide from 5-amino-1-(5-phospho-D-ribosyl)imidazole-4-carboxylate: step 1/2. The chain is Phosphoribosylaminoimidazole-succinocarboxamide synthase from Bifidobacterium adolescentis (strain ATCC 15703 / DSM 20083 / NCTC 11814 / E194a).